We begin with the raw amino-acid sequence, 216 residues long: Elongation factor 1-beta (216 aa).

Residues 71-131 (GQASGVSASS…AKKKESGKSS (61 aa)) form a disordered region. Over residues 73-89 (ASGVSASSAPAAAAPAA) the composition is skewed to low complexity. The span at 92 to 107 (DEDDDDDMDLFGDETE) shows a compositional bias: acidic residues. The segment covering 108 to 128 (EDKKAAAEREAAKPAKKKESG) has biased composition (basic and acidic residues).

This sequence belongs to the EF-1-beta/EF-1-delta family. In terms of assembly, EF-1 is composed of 4 subunits: alpha, beta (1B-alpha=beta'), delta (1B-beta), and gamma (1B-gamma).

Functionally, EF-1-beta and EF-1-beta' stimulate the exchange of GDP bound to EF-1-alpha to GTP. This Triticum aestivum (Wheat) protein is Elongation factor 1-beta.